The following is a 392-amino-acid chain: Formate-dependent phosphoribosylglycinamide formyltransferase (392 aa).

N(1)-(5-phospho-beta-D-ribosyl)glycinamide contacts are provided by residues 20–21 and E80; that span reads EL. ATP-binding positions include R112, K153, 158 to 163, 193 to 196, and E201; these read SSGKGQ and EGFV. The region spanning 117–306 is the ATP-grasp domain; the sequence is RLAAEELGLP…EFALHVRAIL (190 aa). 2 residues coordinate Mg(2+): E265 and E277. N(1)-(5-phospho-beta-D-ribosyl)glycinamide contacts are provided by residues D284, K355, and 362 to 363; that span reads RR.

This sequence belongs to the PurK/PurT family. In terms of assembly, homodimer.

The enzyme catalyses N(1)-(5-phospho-beta-D-ribosyl)glycinamide + formate + ATP = N(2)-formyl-N(1)-(5-phospho-beta-D-ribosyl)glycinamide + ADP + phosphate + H(+). It functions in the pathway purine metabolism; IMP biosynthesis via de novo pathway; N(2)-formyl-N(1)-(5-phospho-D-ribosyl)glycinamide from N(1)-(5-phospho-D-ribosyl)glycinamide (formate route): step 1/1. Involved in the de novo purine biosynthesis. Catalyzes the transfer of formate to 5-phospho-ribosyl-glycinamide (GAR), producing 5-phospho-ribosyl-N-formylglycinamide (FGAR). Formate is provided by PurU via hydrolysis of 10-formyl-tetrahydrofolate. The protein is Formate-dependent phosphoribosylglycinamide formyltransferase of Aeromonas salmonicida (strain A449).